The chain runs to 108 residues: MIPGEYLCADGVIEINPGRERIALDVVNTGDRPVQVGSHVHFPQANAALDFDRAAAHGCRLDIPAGTAVRFEPGLAQRVSLVPLAGTREVYGIGPNPPGKLDDPEGEQ.

Belongs to the urease beta subunit family. Heterotrimer of UreA (gamma), UreB (beta) and UreC (alpha) subunits. Three heterotrimers associate to form the active enzyme.

The protein resides in the cytoplasm. It carries out the reaction urea + 2 H2O + H(+) = hydrogencarbonate + 2 NH4(+). The protein operates within nitrogen metabolism; urea degradation; CO(2) and NH(3) from urea (urease route): step 1/1. In Nocardia farcinica (strain IFM 10152), this protein is Urease subunit beta.